A 393-amino-acid chain; its full sequence is Chalcone synthase DIII (393 aa).

The active site involves Cys-164.

It belongs to the thiolase-like superfamily. Chalcone/stilbene synthases family.

The enzyme catalyses (E)-4-coumaroyl-CoA + 3 malonyl-CoA + 3 H(+) = 2',4,4',6'-tetrahydroxychalcone + 3 CO2 + 4 CoA. Its pathway is secondary metabolite biosynthesis; flavonoid biosynthesis. In terms of biological role, the primary product of this enzyme is 4,2',4',6'-tetrahydroxychalcone (also termed naringenin-chalcone or chalcone) which can under specific conditions spontaneously isomerize into naringenin. The chain is Chalcone synthase DIII (CHS-DIII) from Ipomoea batatas (Sweet potato).